The chain runs to 181 residues: Probable pyruvoyl-dependent arginine decarboxylase (181 aa).

At serine 43 the chain carries Pyruvic acid (Ser).

Belongs to the PdaD family. It depends on pyruvate as a cofactor.

It carries out the reaction L-arginine + H(+) = agmatine + CO2. This Prosthecochloris aestuarii (strain DSM 271 / SK 413) protein is Probable pyruvoyl-dependent arginine decarboxylase.